The chain runs to 397 residues: DnaJ homolog subfamily A member 4 (397 aa).

The 67-residue stretch at 4–70 (ETQYYDILGV…RDVYDQGGEQ (67 aa)) folds into the J domain. The residue at position 18 (Ser-18) is a Phosphoserine. The CR-type zinc finger occupies 122–206 (GVTKKLALQK…CSGAKVIREK (85 aa)). 8 residues coordinate Zn(2+): Cys-135, Cys-138, Cys-151, Cys-154, Cys-178, Cys-181, Cys-194, and Cys-197. CXXCXGXG motif repeat units lie at residues 135-142 (CEKCEGVG), 151-158 (CPLCKGRG), 178-185 (CIECKGQG), and 194-201 (CESCSGAK). Cys-394 is modified (cysteine methyl ester). Cys-394 carries the S-farnesyl cysteine lipid modification. Residues 395 to 397 (QTA) constitute a propeptide, removed in mature form.

It is found in the membrane. The polypeptide is DnaJ homolog subfamily A member 4 (DNAJA4) (Homo sapiens (Human)).